The following is a 649-amino-acid chain: Phospholipase A1 PLIP1, chloroplastic (649 aa).

The N-terminal 67 residues, M1–R67, are a transit peptide targeting the chloroplast. Positions G420–G424 match the GXSXG motif. Catalysis depends on S422, which acts as the Acyl-ester intermediate. Catalysis depends on charge relay system residues D483 and H593.

This sequence belongs to the AB hydrolase superfamily. Lipase family.

The protein resides in the plastid. Its subcellular location is the chloroplast thylakoid membrane. The catalysed reaction is a 1,2-diacyl-sn-glycero-3-phosphocholine + H2O = a 2-acyl-sn-glycero-3-phosphocholine + a fatty acid + H(+). It catalyses the reaction a 1,2-diacyl-3-O-(beta-D-galactosyl)-sn-glycerol + 2 H2O = 3-beta-D-galactosyl-sn-glycerol + 2 a fatty acid + 2 H(+). Its function is as follows. Sn-1-specific phospholipase A1 involved in seed oil biosynthesis. Hydrolyzes polyunsaturated acyl groups from a unique chloroplast-specific phosphatidylglycerol (PG) that contains 16:1 delta 3-trans as its second acyl group. The polyunsaturated acyl groups released by PLIP1 are exported from the chloroplast, reincorporated into phosphatidylcholine (PC), and ultimately enter seed triacylglycerol (TAG). In vitro, possesses broad substrate specificity. Can hydrolyze the galactolipid monogalactosyldiacylglycerol (MGDG), and the phoshpolipids phosphatidylcholine (PC), phosphatidylethanolamine (PE), phosphatidic acid (PA), phosphatidylserine (PS) phosphatidylglycerol (PG) and phosphatidylinositol (PI). The sequence is that of Phospholipase A1 PLIP1, chloroplastic from Arabidopsis thaliana (Mouse-ear cress).